Here is a 487-residue protein sequence, read N- to C-terminus: Protein nucleotidyltransferase YdiU (487 aa).

Residues glycine 86, glycine 88, arginine 89, lysine 109, aspartate 121, glycine 122, arginine 172, and arginine 179 each coordinate ATP. The active-site Proton acceptor is the aspartate 248. Mg(2+) is bound by residues asparagine 249 and aspartate 258. An ATP-binding site is contributed by aspartate 258.

The protein belongs to the SELO family. The cofactor is Mg(2+). Requires Mn(2+) as cofactor.

It carries out the reaction L-seryl-[protein] + ATP = 3-O-(5'-adenylyl)-L-seryl-[protein] + diphosphate. The catalysed reaction is L-threonyl-[protein] + ATP = 3-O-(5'-adenylyl)-L-threonyl-[protein] + diphosphate. The enzyme catalyses L-tyrosyl-[protein] + ATP = O-(5'-adenylyl)-L-tyrosyl-[protein] + diphosphate. It catalyses the reaction L-histidyl-[protein] + UTP = N(tele)-(5'-uridylyl)-L-histidyl-[protein] + diphosphate. It carries out the reaction L-seryl-[protein] + UTP = O-(5'-uridylyl)-L-seryl-[protein] + diphosphate. The catalysed reaction is L-tyrosyl-[protein] + UTP = O-(5'-uridylyl)-L-tyrosyl-[protein] + diphosphate. Its function is as follows. Nucleotidyltransferase involved in the post-translational modification of proteins. It can catalyze the addition of adenosine monophosphate (AMP) or uridine monophosphate (UMP) to a protein, resulting in modifications known as AMPylation and UMPylation. The sequence is that of Protein nucleotidyltransferase YdiU from Sphingopyxis alaskensis (strain DSM 13593 / LMG 18877 / RB2256) (Sphingomonas alaskensis).